The following is a 355-amino-acid chain: Putative GPI-anchor transamidase (355 aa).

A signal peptide spans 1–24 (MFNIMLVKFVVIFALILASCRVEA). Catalysis depends on residues His-165 and Cys-207.

Belongs to the peptidase C13 family.

It functions in the pathway glycolipid biosynthesis; glycosylphosphatidylinositol-anchor biosynthesis. In terms of biological role, mediates GPI anchoring in the endoplasmic reticulum, by replacing a protein's C-terminal GPI attachment signal peptide with a pre-assembled GPI. During this transamidation reaction, the GPI transamidase forms a carbonyl intermediate with the substrate protein. This chain is Putative GPI-anchor transamidase, found in Drosophila melanogaster (Fruit fly).